The primary structure comprises 120 residues: NAD(P)H-quinone oxidoreductase subunit 3, chloroplastic (120 aa).

3 helical membrane passes run 7-27 (YNYFWIFLLIASLIPTIAFSI), 64-84 (MFALVFVIFDVETVFLYPWAM), and 89-109 (LGIPAFIEVFIFVFILIIGLI).

Belongs to the complex I subunit 3 family. As to quaternary structure, NDH is composed of at least 16 different subunits, 5 of which are encoded in the nucleus.

Its subcellular location is the plastid. The protein resides in the chloroplast thylakoid membrane. The enzyme catalyses a plastoquinone + NADH + (n+1) H(+)(in) = a plastoquinol + NAD(+) + n H(+)(out). It catalyses the reaction a plastoquinone + NADPH + (n+1) H(+)(in) = a plastoquinol + NADP(+) + n H(+)(out). Its function is as follows. NDH shuttles electrons from NAD(P)H:plastoquinone, via FMN and iron-sulfur (Fe-S) centers, to quinones in the photosynthetic chain and possibly in a chloroplast respiratory chain. The immediate electron acceptor for the enzyme in this species is believed to be plastoquinone. Couples the redox reaction to proton translocation, and thus conserves the redox energy in a proton gradient. This Anthoceros angustus (Hornwort) protein is NAD(P)H-quinone oxidoreductase subunit 3, chloroplastic.